Consider the following 806-residue polypeptide: DNA topoisomerase 4 subunit A (806 aa).

One can recognise a Topo IIA-type catalytic domain in the interval 33 to 499 (LPDARDGLKP…EEIKINLEVM (467 aa)). Catalysis depends on Y121, which acts as the O-(5'-phospho-DNA)-tyrosine intermediate.

Belongs to the type II topoisomerase GyrA/ParC subunit family. ParC type 2 subfamily. In terms of assembly, heterotetramer composed of ParC and ParE.

The protein localises to the cell membrane. The protein resides in the cytoplasm. It carries out the reaction ATP-dependent breakage, passage and rejoining of double-stranded DNA.. Functionally, topoisomerase IV is essential for chromosome segregation. It relaxes supercoiled DNA. Performs the decatenation events required during the replication of a circular DNA molecule. The polypeptide is DNA topoisomerase 4 subunit A (Bacillus subtilis (strain 168)).